Reading from the N-terminus, the 448-residue chain is 5-hydroxytryptamine receptor 7 (448 aa).

The Extracellular portion of the chain corresponds to 1–86; the sequence is MMDVNSSGRP…INYGRVEKVV (86 aa). N-linked (GlcNAc...) asparagine glycosylation is found at Asn5 and Asn69. Residues 87–111 form a helical membrane-spanning segment; it reads IGSILTLITLLTIAGNCLVVISVCF. Residues 112-121 are Cytoplasmic-facing; that stretch reads VKKLRQPSNY. A helical membrane pass occupies residues 122–143; sequence LIVSLALADLSVAVAVMPFVSV. The Extracellular portion of the chain corresponds to 144–155; the sequence is TDLIGGKWIFGH. Residues 156 to 181 form a helical membrane-spanning segment; that stretch reads FFCNVFIAMDVMCCTASIMTLCVISI. An intrachain disulfide couples Cys158 to Cys234. Asp165 contributes to the serotonin binding site. Residues 182–201 are Cytoplasmic-facing; sequence DRYLGITRPLTYPVRQNGKC. Residues 202–222 form a helical membrane-spanning segment; sequence MAKMILSVWLLSASITLPPLF. At 223–240 the chain is on the extracellular side; that stretch reads GWAQNVNDDKVCLISQDF. Residues 241 to 263 traverse the membrane as a helical segment; it reads GYTIYSTAVAFYIPMSVMLFMYY. Topologically, residues 264 to 329 are cytoplasmic; it reads QIYKAARKSA…SIFKREQKAA (66 aa). Residues 330 to 355 form a helical membrane-spanning segment; sequence TTLGIIVGAFTVCWLPFFLLSTARPF. The Extracellular portion of the chain corresponds to 356–366; that stretch reads ICGTSCSCIPL. A helical transmembrane segment spans residues 367–390; that stretch reads WVERTCLWLGYANSLINPFIYAFF. The Cytoplasmic portion of the chain corresponds to 391–448; that stretch reads NRDLRTTYRSLLQCQYRNINRKLSAAGMHEALKLAERPERSEFVLQNSDHCGKKGHDT. Residue Cys404 is the site of S-palmitoyl cysteine attachment.

It belongs to the G-protein coupled receptor 1 family. Thalamus, hypothalamus, and the hippocampal rudiments.

It localises to the cell membrane. Functionally, G-protein coupled receptor for 5-hydroxytryptamine (serotonin), a biogenic hormone that functions as a neurotransmitter, a hormone and a mitogen. Ligand binding causes a conformation change that triggers signaling via guanine nucleotide-binding proteins (G proteins) and modulates the activity of downstream effectors. HTR7 is coupled to G(s) G alpha proteins and mediates activation of adenylate cyclase activity. This is 5-hydroxytryptamine receptor 7 from Rattus norvegicus (Rat).